A 604-amino-acid chain; its full sequence is Rhotekin-2 (604 aa).

The REM-1 domain occupies 1–74 (MEGQLLRGLA…LQKSKEEIAN (74 aa)). A coiled-coil region spans residues 53–79 (VCSARIQAYTAELQKSKEEIANQTGAR). Residues 281-387 (ADAFAGFLNE…WMGAFRQHFF (107 aa)) form the PH domain. Positions 481–590 (LSPIGEPAPD…PVPVPRQKSI (110 aa)) are disordered. The span at 514–527 (GRANQSKDSATQAG) shows a compositional bias: polar residues. Residues 529-543 (SGASSSPSDPRLSPP) are compositionally biased toward low complexity.

In terms of biological role, may play an important role in lymphopoiesis. The polypeptide is Rhotekin-2 (Rtkn2) (Mus musculus (Mouse)).